The following is a 360-amino-acid chain: DNA integrity scanning protein DisA (360 aa).

In terms of domain architecture, DAC spans 11–149 (ELDLSSILQF…ENMKYTLKDI (139 aa)). ATP is bound by residues Gly78, Leu96, and 109-113 (MRHRT).

The protein belongs to the DisA family. In terms of assembly, homooligomer. Interacts with RadA. Requires Mg(2+) as cofactor.

It is found in the cytoplasm. The catalysed reaction is 2 ATP = 3',3'-c-di-AMP + 2 diphosphate. Diadenylate cyclase (DAC) activity is inhibited 2-fold by Holliday junction (HJ) DNA, further addition of RecG inhibits DAC activity 11-fold; RecG may relocate DisA from the HJ. DAC is inhibited by the interaction with RadA. Diadenylate cyclase activity is not affected by ssDNA or dsDNA, but three- and four-way junctions strongly inhibit the activity of DisA, suggesting the enzyme is regulated by branched nucleic acids. Functionally, participates in a DNA-damage check-point that is active prior to asymmetric division when DNA is damaged. Forms globular foci that rapidly scan along the chromosomes during sporulation, searching for lesions. Its ability to scan through the chromosome rapidly is due to its non-specific DNA-binding. When a lesion is present, DisA pauses at the lesion site. This triggers a cellular response that culminates in a temporary block in sporulation initiation. It is required, at least partially, to inhibit the activity of the transcription factor spo0A, which controls, among others, early sporulation genes. In B.subtilis c-di-AMP is a second messenger that mediates growth, DNA repair and cell wall homeostasis; it is toxic when present in excess. Limits the replication fork reggression activity of RecG; DisA inhibits the ATPase activity of RecG. By limiting RecG-mediated fork regression, DisA provides time for removal of potentially lethal DNA lesions. In terms of biological role, one of 3 paralogous diadenylate cyclases (DAC) in this bacteria. Has diadenylate cyclase activity, catalyzing the condensation of 2 ATP molecules into cyclic di-AMP (c-di-AMP). c-di-AMP acts as a signaling molecule that couples DNA integrity with progression of sporulation. The rise in c-di-AMP level generated by DisA while scanning the chromosome operates as a positive signal that advances sporulation; upon encountering a lesion, the DisA focus arrests at the damaged site and halts c-di-AMP synthesis. Does not convert GTP to c-di-GMP. The polypeptide is DNA integrity scanning protein DisA (Bacillus subtilis (strain 168)).